Here is a 169-residue protein sequence, read N- to C-terminus: MAEENQTTPADAAQAAQGPQFAIQRIYTKDISFETPNSPAIFQKEWKPEVQLDLDTRSALIEENVYEIVLAVTVTAMLGEETAFLCEVQQAGIFAIGEMPEQNKAHMLGSFCPNTLFPYARETISNLVNRGTFPPLNLAPVNFDAIFAAYMQKRAAQQAQEQAPTQLDA.

This sequence belongs to the SecB family. In terms of assembly, homotetramer, a dimer of dimers. One homotetramer interacts with 1 SecA dimer.

It localises to the cytoplasm. Functionally, one of the proteins required for the normal export of preproteins out of the cell cytoplasm. It is a molecular chaperone that binds to a subset of precursor proteins, maintaining them in a translocation-competent state. It also specifically binds to its receptor SecA. This chain is Protein-export protein SecB, found in Pseudoalteromonas atlantica (strain T6c / ATCC BAA-1087).